Here is a 572-residue protein sequence, read N- to C-terminus: Squalene monooxygenase (572 aa).

Residues 1-19 (MWTFLGIATFTYFYKKCGD) are Cytoplasmic-facing. The interaction with MARCHF6 stretch occupies residues 1-98 (MWTFLGIATF…EQLESKKCRK (98 aa)). An intramembrane segment occupies 20–40 (VTLANKELLLCVLVFLSLGLV). The Cytoplasmic portion of the chain corresponds to 41–572 (LSYRCRHRHG…IYSEMKYLVH (532 aa)). The segment at 61–72 (QFAAFSDILSAL) is required for degradation in response to high membrane cholesterol levels. The sufficient for enzyme activity stretch occupies residues 116–572 (TSFVTDPEVI…IYSEMKYLVH (457 aa)). FAD contacts are provided by residues 131–132 (VL), 151–152 (ER), Arg159, Arg232, Val248, Asp406, and Met419. The hydrophobic; mediates interaction with membranes stretch occupies residues 514 to 572 (PLVLIRHFFSVAIYATYFCFKSEPWATKPRALFSSGAVLYKACSILFPLIYSEMKYLVH).

This sequence belongs to the squalene monooxygenase family. In terms of assembly, interacts (via N-terminal domain) with MARCHF6. Interacts with SMIM22; this interaction modulates lipid droplet formation. The cofactor is FAD. In terms of processing, ubiquitinated by MARCHF6 in response to high cholesterol levels in intracellular membranes, leading to proteasomal degradation. In terms of tissue distribution, detected in liver.

The protein localises to the microsome membrane. It localises to the endoplasmic reticulum membrane. The enzyme catalyses squalene + reduced [NADPH--hemoprotein reductase] + O2 = (S)-2,3-epoxysqualene + oxidized [NADPH--hemoprotein reductase] + H2O + H(+). The protein operates within terpene metabolism; lanosterol biosynthesis; lanosterol from farnesyl diphosphate: step 2/3. Catalyzes the stereospecific oxidation of squalene to (S)-2,3-epoxysqualene, and is considered to be a rate-limiting enzyme in steroid biosynthesis. The chain is Squalene monooxygenase (Sqle) from Mus musculus (Mouse).